The following is a 349-amino-acid chain: tRNA pseudouridine synthase D (349 aa).

A substrate-binding site is contributed by Phe27. The Nucleophile role is filled by Asp80. Asn129 provides a ligand contact to substrate. A TRUD domain is found at 155 to 303 (GVPNYFGAQR…VEAARRAMLL (149 aa)). Residue Phe329 coordinates substrate.

This sequence belongs to the pseudouridine synthase TruD family.

It catalyses the reaction uridine(13) in tRNA = pseudouridine(13) in tRNA. Functionally, responsible for synthesis of pseudouridine from uracil-13 in transfer RNAs. This chain is tRNA pseudouridine synthase D, found in Escherichia coli (strain K12 / MC4100 / BW2952).